Consider the following 319-residue polypeptide: L-lactate dehydrogenase (319 aa).

Residues Val17, Asp38, Lys43, Tyr69, and 83–84 (GA) contribute to the NAD(+) site. Substrate contacts are provided by Gln86 and Arg92. NAD(+)-binding positions include Thr105, 122–124 (ATN), and Ser147. Residue 124-127 (NPVD) participates in substrate binding. 152-155 (DTAR) contributes to the substrate binding site. Beta-D-fructose 1,6-bisphosphate contacts are provided by Arg157 and His172. Catalysis depends on His179, which acts as the Proton acceptor. Tyr224 carries the phosphotyrosine modification. Substrate is bound at residue Thr233.

It belongs to the LDH/MDH superfamily. LDH family. In terms of assembly, homotetramer.

Its subcellular location is the cytoplasm. It carries out the reaction (S)-lactate + NAD(+) = pyruvate + NADH + H(+). It participates in fermentation; pyruvate fermentation to lactate; (S)-lactate from pyruvate: step 1/1. With respect to regulation, allosterically activated by fructose 1,6-bisphosphate (FBP). In terms of biological role, catalyzes the conversion of lactate to pyruvate. The sequence is that of L-lactate dehydrogenase from Geobacillus sp. (strain WCH70).